We begin with the raw amino-acid sequence, 60 residues long: Prophage outer membrane lipoprotein RzoD (60 aa).

Positions 1–19 (MRKLKMMLCVMMLPLVVVG) are cleaved as a signal peptide. A lipid anchor (N-palmitoyl cysteine) is attached at Cys20. Cys20 carries S-diacylglycerol cysteine lipidation.

This sequence belongs to the lambdalikevirus o-spanin family. Homodimer; disulfide-linked. Interacts (via C-terminus) with RZ (via C-terminus). Part of the spanin complex which spans the entire periplasmic space. The spanin complex is composed of spanin, inner membrane subunit and spanin, outer membrane subunit.

The protein resides in the cell outer membrane. Its function is as follows. Component of the spanin complex that disrupts the outer membrane and causes cell lysis during virus exit. The spanin complex conducts the final step in cell lysis by disrupting the outer membrane after holin and endolysin action have permeabilized the inner membrane and degraded the host peptidoglycans. This Escherichia coli (strain K12) protein is Prophage outer membrane lipoprotein RzoD (rzoD).